Consider the following 283-residue polypeptide: 4-diphosphocytidyl-2-C-methyl-D-erythritol kinase (283 aa).

Residue Lys10 is part of the active site. 99–109 (PMGGGLGGGSS) contributes to the ATP binding site. Asp141 is an active-site residue.

This sequence belongs to the GHMP kinase family. IspE subfamily. As to quaternary structure, homodimer.

The catalysed reaction is 4-CDP-2-C-methyl-D-erythritol + ATP = 4-CDP-2-C-methyl-D-erythritol 2-phosphate + ADP + H(+). It participates in isoprenoid biosynthesis; isopentenyl diphosphate biosynthesis via DXP pathway; isopentenyl diphosphate from 1-deoxy-D-xylulose 5-phosphate: step 3/6. Catalyzes the phosphorylation of the position 2 hydroxy group of 4-diphosphocytidyl-2C-methyl-D-erythritol. The protein is 4-diphosphocytidyl-2-C-methyl-D-erythritol kinase of Salmonella enteritidis PT4 (strain P125109).